We begin with the raw amino-acid sequence, 224 residues long: Pyridoxal 5'-phosphate synthase subunit SNO1 (224 aa).

An L-glutamine-binding site is contributed by 67–69 (GES). Cys-100 acts as the Nucleophile in catalysis. L-glutamine is bound by residues Arg-129 and 160 to 161 (IR). Residues His-203 and Glu-205 each act as charge relay system in the active site.

It belongs to the glutaminase PdxT/SNO family.

The catalysed reaction is aldehydo-D-ribose 5-phosphate + D-glyceraldehyde 3-phosphate + L-glutamine = pyridoxal 5'-phosphate + L-glutamate + phosphate + 3 H2O + H(+). It carries out the reaction L-glutamine + H2O = L-glutamate + NH4(+). Its pathway is cofactor biosynthesis; pyridoxal 5'-phosphate biosynthesis. Catalyzes the hydrolysis of glutamine to glutamate and ammonia as part of the biosynthesis of pyridoxal 5'-phosphate. The resulting ammonia molecule is channeled to the active site of a SNZ isoform. The sequence is that of Pyridoxal 5'-phosphate synthase subunit SNO1 (SNO1) from Saccharomyces cerevisiae (strain ATCC 204508 / S288c) (Baker's yeast).